The chain runs to 312 residues: Protein phosphatase PTC7 homolog fig (312 aa).

One can recognise a PPM-type phosphatase domain in the interval 42–306; that stretch reads IQGSSKDQLA…DDITVILASV (265 aa). Residues Asp83, Gly84, and Asp228 each contribute to the Mn(2+) site.

It belongs to the PP2C family. Mg(2+) serves as cofactor. It depends on Mn(2+) as a cofactor.

The enzyme catalyses O-phospho-L-seryl-[protein] + H2O = L-seryl-[protein] + phosphate. The catalysed reaction is O-phospho-L-threonyl-[protein] + H2O = L-threonyl-[protein] + phosphate. The chain is Protein phosphatase PTC7 homolog fig from Drosophila mojavensis (Fruit fly).